The sequence spans 105 residues: Putative membrane protein insertion efficiency factor (105 aa).

Residues 76 to 105 (GHPGGVDPVPPGPHETPRKTSTHDDEPPSR) form a disordered region. A compositionally biased stretch (basic and acidic residues) spans 90–105 (ETPRKTSTHDDEPPSR).

The protein belongs to the UPF0161 family.

It localises to the cell inner membrane. Could be involved in insertion of integral membrane proteins into the membrane. The polypeptide is Putative membrane protein insertion efficiency factor (Chromohalobacter salexigens (strain ATCC BAA-138 / DSM 3043 / CIP 106854 / NCIMB 13768 / 1H11)).